The chain runs to 311 residues: Regulator of rDNA transcription protein 6 (311 aa).

2 helical membrane passes run 32–52 and 271–291; these read PHLL…SAEL and YLIV…IIVT.

The protein resides in the membrane. Its function is as follows. May be involved in the modulation of rDNA transcription. In Saccharomyces cerevisiae (strain ATCC 204508 / S288c) (Baker's yeast), this protein is Regulator of rDNA transcription protein 6 (RRT6).